We begin with the raw amino-acid sequence, 920 residues long: Nonribosomal peptide synthetase atrA (920 aa).

Residues 13–428 (AAAQERCGRV…AGRLKETMII (416 aa)) form an adenylation (A) domain region. Residues 558–637 (PPKDELERSL…ELSAALHDLQ (80 aa)) form the Carrier domain. An O-(pantetheine 4'-phosphoryl)serine modification is found at Ser-595. Residues 656 to 905 (PLWLIHPGVG…YTMLAPEHVF (250 aa)) form a thioesterase (TE) domain region.

This sequence belongs to the NRP synthetase family.

It carries out the reaction 2 3-(4-hydroxyphenyl)pyruvate + 2 ATP = atromentin + 2 AMP + 2 diphosphate + H(+). Functionally, nonribosomal peptide synthetase that mediates the biosynthesis of atromentin. AtrA first activates 4-hydroxyphenylpyruvate (HPPA) through its A domain to AMP-HPPA. The HPPA unit is then loaded to the T domain and eventually transferred to the TE domain. Another HPPA unit is then loaded onto the T domain. The TE domain then catalyzes the condensation of the two HPPA units and the release of atromentin via cyclization. This Aspergillus terreus (strain NIH 2624 / FGSC A1156) protein is Nonribosomal peptide synthetase atrA.